A 340-amino-acid polypeptide reads, in one-letter code: Holliday junction branch migration complex subunit RuvB (340 aa).

The interval 1–184 is large ATPase domain (RuvB-L); the sequence is MNENLDPTNQ…FGIQSRLQYY (184 aa). Residues leucine 23, arginine 24, glycine 65, lysine 68, threonine 69, threonine 70, 131–133, arginine 174, tyrosine 184, and arginine 221 contribute to the ATP site; that span reads EDF. Threonine 69 lines the Mg(2+) pocket. Residues 185–255 are small ATPAse domain (RuvB-S); sequence NAELLTTIVQ…IAKFALNALH (71 aa). The interval 258 to 340 is head domain (RuvB-H); it reads AHGLDEMDNK…VKANVQGGLF (83 aa). 2 residues coordinate DNA: arginine 313 and arginine 318.

Belongs to the RuvB family. Homohexamer. Forms an RuvA(8)-RuvB(12)-Holliday junction (HJ) complex. HJ DNA is sandwiched between 2 RuvA tetramers; dsDNA enters through RuvA and exits via RuvB. An RuvB hexamer assembles on each DNA strand where it exits the tetramer. Each RuvB hexamer is contacted by two RuvA subunits (via domain III) on 2 adjacent RuvB subunits; this complex drives branch migration. In the full resolvosome a probable DNA-RuvA(4)-RuvB(12)-RuvC(2) complex forms which resolves the HJ.

It is found in the cytoplasm. The enzyme catalyses ATP + H2O = ADP + phosphate + H(+). The RuvA-RuvB-RuvC complex processes Holliday junction (HJ) DNA during genetic recombination and DNA repair, while the RuvA-RuvB complex plays an important role in the rescue of blocked DNA replication forks via replication fork reversal (RFR). RuvA specifically binds to HJ cruciform DNA, conferring on it an open structure. The RuvB hexamer acts as an ATP-dependent pump, pulling dsDNA into and through the RuvAB complex. RuvB forms 2 homohexamers on either side of HJ DNA bound by 1 or 2 RuvA tetramers; 4 subunits per hexamer contact DNA at a time. Coordinated motions by a converter formed by DNA-disengaged RuvB subunits stimulates ATP hydrolysis and nucleotide exchange. Immobilization of the converter enables RuvB to convert the ATP-contained energy into a lever motion, pulling 2 nucleotides of DNA out of the RuvA tetramer per ATP hydrolyzed, thus driving DNA branch migration. The RuvB motors rotate together with the DNA substrate, which together with the progressing nucleotide cycle form the mechanistic basis for DNA recombination by continuous HJ branch migration. Branch migration allows RuvC to scan DNA until it finds its consensus sequence, where it cleaves and resolves cruciform DNA. The protein is Holliday junction branch migration complex subunit RuvB of Flavobacterium psychrophilum (strain ATCC 49511 / DSM 21280 / CIP 103535 / JIP02/86).